A 396-amino-acid chain; its full sequence is Subtilisin-like protease 5 (396 aa).

A signal peptide spans 1-20 (MTGFFTILSFSLAALSVTNA). The propeptide occupies 21–116 (AQILSVPKGA…VEPDAIISQH (96 aa)). One can recognise an Inhibitor I9 domain in the interval 37 to 113 (YIVVMKDDTS…VAFVEPDAII (77 aa)). Asn-63 carries N-linked (GlcNAc...) asparagine glycosylation. The 272-residue stretch at 125–396 (PWGLSRLSNR…TRLLYNGSGR (272 aa)) folds into the Peptidase S8 domain. Active-site charge relay system residues include Asp-156 and His-187. 2 N-linked (GlcNAc...) asparagine glycosylation sites follow: Asn-230 and Asn-248. The Charge relay system role is filled by Ser-342. Positions 377 to 389 (TIRNPGPDTTTRL) are enriched in polar residues. The interval 377-396 (TIRNPGPDTTTRLLYNGSGR) is disordered. A glycan (N-linked (GlcNAc...) asparagine) is linked at Asn-392.

The protein belongs to the peptidase S8 family.

It localises to the secreted. Its function is as follows. Secreted subtilisin-like serine protease with keratinolytic activity that contributes to pathogenicity. The protein is Subtilisin-like protease 5 (SUB5) of Arthroderma benhamiae (Trichophyton mentagrophytes).